The following is a 472-amino-acid chain: MSEPTGKILAIMGAVVDVEFPDGHLPKLNHALVIRNGGERGDINLTLEVAQHLGNNQVRCIAMDSTDGLRRGETVYDTQAPITVPVGEPVLGRIFNVLGETIDGKGPVNSPVSLPIHREPPGVANVDPATEMLPTGIKVIDLLCPYARGGKIGLFGGAGVGKTVMIQELIHNIAYKFGGYSIFAGVGERTREGNDLYHEMIEAGVIDKVAMVFGQMNEPPGARMRVALTGLTMAEYFRDEQGLDVLLFIDNIFRFTQAGSEVSALLGRMPSAVGYQPTLATEMGYLQERITSTKKGSITSVQAIYVPADDLTDPAPATTFAHLDATTVLSRAVFEKAIFPAVDPLDSTSRILDPNIVGREHYEVARGVQKVLQRYKELQDIIAILGMDELSDEDKLIVARARKIERFLSQPMFVAEKFTNLPGVFVDPKDTVKGFKEILEGKHDDLPEQAFYMVGTIEQAVEKGKKLLAEVS.

156–163 (GGAGVGKT) is a binding site for ATP.

It belongs to the ATPase alpha/beta chains family. In terms of assembly, F-type ATPases have 2 components, CF(1) - the catalytic core - and CF(0) - the membrane proton channel. CF(1) has five subunits: alpha(3), beta(3), gamma(1), delta(1), epsilon(1). CF(0) has three main subunits: a(1), b(2) and c(9-12). The alpha and beta chains form an alternating ring which encloses part of the gamma chain. CF(1) is attached to CF(0) by a central stalk formed by the gamma and epsilon chains, while a peripheral stalk is formed by the delta and b chains.

The protein resides in the cell membrane. The enzyme catalyses ATP + H2O + 4 H(+)(in) = ADP + phosphate + 5 H(+)(out). Functionally, produces ATP from ADP in the presence of a proton gradient across the membrane. The catalytic sites are hosted primarily by the beta subunits. The protein is ATP synthase subunit beta of Symbiobacterium thermophilum (strain DSM 24528 / JCM 14929 / IAM 14863 / T).